The following is a 445-amino-acid chain: Eukaryotic translation initiation factor 3 subunit E (445 aa).

The PCI domain maps to 230–403 (FFNHVKGRDL…GHVVMGAQPL (174 aa)).

The protein belongs to the eIF-3 subunit E family. In terms of assembly, component of the eukaryotic translation initiation factor 3 (eIF-3) complex.

It is found in the cytoplasm. Its function is as follows. Component of the eukaryotic translation initiation factor 3 (eIF-3) complex, which is involved in protein synthesis of a specialized repertoire of mRNAs and, together with other initiation factors, stimulates binding of mRNA and methionyl-tRNAi to the 40S ribosome. The eIF-3 complex specifically targets and initiates translation of a subset of mRNAs involved in cell proliferation. The chain is Eukaryotic translation initiation factor 3 subunit E (eIF3-S6) from Bombyx mori (Silk moth).